Reading from the N-terminus, the 197-residue chain is Glycerol-3-phosphate acyltransferase (197 aa).

A run of 5 helical transmembrane segments spans residues L2–V22, A53–L73, P78–F98, V112–A132, and Y152–V174.

Belongs to the PlsY family. Probably interacts with PlsX.

It is found in the cell inner membrane. It catalyses the reaction an acyl phosphate + sn-glycerol 3-phosphate = a 1-acyl-sn-glycero-3-phosphate + phosphate. It functions in the pathway lipid metabolism; phospholipid metabolism. Functionally, catalyzes the transfer of an acyl group from acyl-phosphate (acyl-PO(4)) to glycerol-3-phosphate (G3P) to form lysophosphatidic acid (LPA). This enzyme utilizes acyl-phosphate as fatty acyl donor, but not acyl-CoA or acyl-ACP. The protein is Glycerol-3-phosphate acyltransferase of Halorhodospira halophila (strain DSM 244 / SL1) (Ectothiorhodospira halophila (strain DSM 244 / SL1)).